The following is a 98-amino-acid chain: NADH-ubiquinone oxidoreductase chain 4L (98 aa).

3 consecutive transmembrane segments (helical) span residues Pro2 to Phe22, Ser29 to Leu49, and Ile61 to Val81.

This sequence belongs to the complex I subunit 4L family. Core subunit of respiratory chain NADH dehydrogenase (Complex I) which is composed of 45 different subunits.

The protein resides in the mitochondrion inner membrane. It catalyses the reaction a ubiquinone + NADH + 5 H(+)(in) = a ubiquinol + NAD(+) + 4 H(+)(out). Functionally, core subunit of the mitochondrial membrane respiratory chain NADH dehydrogenase (Complex I) which catalyzes electron transfer from NADH through the respiratory chain, using ubiquinone as an electron acceptor. Part of the enzyme membrane arm which is embedded in the lipid bilayer and involved in proton translocation. This Eulemur coronatus (Crowned lemur) protein is NADH-ubiquinone oxidoreductase chain 4L (MT-ND4L).